The sequence spans 126 residues: E3 ubiquitin-protein ligase PPP1R11 (126 aa).

Residues 1 to 25 (MAEAGAGLSETVTETTVTVTTEPEN) are disordered. Ala-2 is modified (N-acetylalanine). Over residues 10–22 (ETVTETTVTVTTE) the composition is skewed to low complexity. Residues 52–62 (HMGRRSSKCCC) are atypical RING finger domain 1. The interval 70-126 (FGESSTESDEEEEEGCGHTHCVRGHRKGRRRATLGPTPTTPPQPPDPSQPPPGPMQH) is disordered. Ser-73 and Ser-74 each carry phosphoserine. A Phosphothreonine modification is found at Thr-75. Ser-77 carries the post-translational modification Phosphoserine. Positions 85 to 94 (CGHTHCVRGH) are atypical RING finger domain 2. Basic residues predominate over residues 89 to 101 (HCVRGHRKGRRRA). Pro residues predominate over residues 107–126 (PTTPPQPPDPSQPPPGPMQH). Residue Thr-109 is modified to Phosphothreonine.

As to quaternary structure, interacts with TLR2 and UBE2D2. In terms of processing, auto-ubiquitinated. As to expression, widely expressed.

The enzyme catalyses S-ubiquitinyl-[E2 ubiquitin-conjugating enzyme]-L-cysteine + [acceptor protein]-L-lysine = [E2 ubiquitin-conjugating enzyme]-L-cysteine + N(6)-ubiquitinyl-[acceptor protein]-L-lysine.. It participates in protein modification; protein ubiquitination. Atypical E3 ubiquitin-protein ligase which ubiquitinates TLR2 at 'Lys-754' leading to its degradation by the proteasome. Plays a role in regulating inflammatory cytokine release and gram-positive bacterial clearance by functioning, in part, through the ubiquitination and degradation of TLR2. Inhibitor of protein phosphatase 1. This chain is E3 ubiquitin-protein ligase PPP1R11 (PPP1R11), found in Homo sapiens (Human).